Consider the following 152-residue polypeptide: Endoribonuclease YbeY (152 aa).

Zn(2+) is bound by residues histidine 114, histidine 118, and histidine 124.

This sequence belongs to the endoribonuclease YbeY family. It depends on Zn(2+) as a cofactor.

It localises to the cytoplasm. In terms of biological role, single strand-specific metallo-endoribonuclease involved in late-stage 70S ribosome quality control and in maturation of the 3' terminus of the 16S rRNA. The polypeptide is Endoribonuclease YbeY (Wigglesworthia glossinidia brevipalpis).